The following is a 391-amino-acid chain: Succinyl-diaminopimelate desuccinylase (391 aa).

Residue histidine 67 coordinates Zn(2+). The active site involves aspartate 69. Residue aspartate 101 participates in Zn(2+) binding. Glutamate 135 (proton acceptor) is an active-site residue. Residues glutamate 136, glutamate 164, and histidine 353 each coordinate Zn(2+).

This sequence belongs to the peptidase M20A family. DapE subfamily. As to quaternary structure, homodimer. Requires Zn(2+) as cofactor. The cofactor is Co(2+).

It carries out the reaction N-succinyl-(2S,6S)-2,6-diaminopimelate + H2O = (2S,6S)-2,6-diaminopimelate + succinate. Its pathway is amino-acid biosynthesis; L-lysine biosynthesis via DAP pathway; LL-2,6-diaminopimelate from (S)-tetrahydrodipicolinate (succinylase route): step 3/3. In terms of biological role, catalyzes the hydrolysis of N-succinyl-L,L-diaminopimelic acid (SDAP), forming succinate and LL-2,6-diaminopimelate (DAP), an intermediate involved in the bacterial biosynthesis of lysine and meso-diaminopimelic acid, an essential component of bacterial cell walls. The sequence is that of Succinyl-diaminopimelate desuccinylase from Rickettsia bellii (strain RML369-C).